The primary structure comprises 1021 residues: Translation initiation factor IF-2 (1021 aa).

Positions 50–422 (AFPAEGGSAS…RMGAMVPRGN (373 aa)) are disordered. Positions 57-71 (SASGGRPGGRPGPGN) are enriched in gly residues. Residues 75–95 (PAPPRPGLAPRPGPRPVPGRP) are compositionally biased toward pro residues. Residues 96 to 112 (GPAARPGGPAAPSAPAA) are compositionally biased toward low complexity. Residues 113 to 129 (PSAPAPGAPAASPPASQ) show a composition bias toward pro residues. 3 stretches are compositionally biased toward low complexity: residues 130–159 (PRPI…ASGP), 167–178 (GGPAAPGRARPG), and 187–196 (SAPSAPSAGG). The segment covering 198-208 (RPGPRPGPRPS) has biased composition (pro residues). A compositionally biased stretch (low complexity) spans 219-233 (SAGPRQSAGQSGSGP). Pro residues-rich tracts occupy residues 234–254 (ASPP…PRPG) and 262–273 (RPSPGSMPPRPG). Gly residues-rich tracts occupy residues 275 to 291 (RPGG…GSGG) and 306 to 389 (GAPG…GGRG). Over residues 390-401 (RPGRQRKSKRAK) the composition is skewed to basic residues. In terms of domain architecture, tr-type G spans 514–686 (IRPPVVTVMG…IILTADASLD (173 aa)). Positions 523-530 (GHVDHGKT) are G1. GTP is bound at residue 523 to 530 (GHVDHGKT). Residues 548-552 (GITQH) form a G2 region. The tract at residues 573 to 576 (DTPG) is G3. Residues 573 to 577 (DTPGH) and 627 to 630 (NKVD) contribute to the GTP site. Residues 627 to 630 (NKVD) are G4. A G5 region spans residues 663–665 (SAR).

Belongs to the TRAFAC class translation factor GTPase superfamily. Classic translation factor GTPase family. IF-2 subfamily.

The protein resides in the cytoplasm. In terms of biological role, one of the essential components for the initiation of protein synthesis. Protects formylmethionyl-tRNA from spontaneous hydrolysis and promotes its binding to the 30S ribosomal subunits. Also involved in the hydrolysis of GTP during the formation of the 70S ribosomal complex. This Frankia alni (strain DSM 45986 / CECT 9034 / ACN14a) protein is Translation initiation factor IF-2.